The primary structure comprises 183 residues: Ribonuclease M5 (183 aa).

Residues 6–90 form the Toprim domain; it reads KEVIVVEGKD…AYISRVSGTK (85 aa). Residues Glu12, Asp59, and Asp61 each coordinate Mg(2+).

It belongs to the ribonuclease M5 family. The cofactor is Mg(2+).

Its subcellular location is the cytoplasm. The enzyme catalyses Endonucleolytic cleavage of RNA, removing 21 and 42 nucleotides, respectively, from the 5'- and 3'-termini of a 5S-rRNA precursor.. In terms of biological role, required for correct processing of both the 5' and 3' ends of 5S rRNA precursor. Cleaves both sides of a double-stranded region yielding mature 5S rRNA in one step. In Fusobacterium nucleatum subsp. nucleatum (strain ATCC 25586 / DSM 15643 / BCRC 10681 / CIP 101130 / JCM 8532 / KCTC 2640 / LMG 13131 / VPI 4355), this protein is Ribonuclease M5.